Consider the following 706-residue polypeptide: Polyribonucleotide nucleotidyltransferase (706 aa).

The Mg(2+) site is built by Asp486 and Asp492. The KH domain occupies 552–611; it reads PRIIAMKINPEKIRDVIGKGGAVIRALTEETGTQIDIQEDGSVKIACTSMEAGELAKKRI. In terms of domain architecture, S1 motif spans 621–689; it reads GKVYEGPVIK…EKGRLRLSMK (69 aa).

It belongs to the polyribonucleotide nucleotidyltransferase family. Requires Mg(2+) as cofactor.

The protein localises to the cytoplasm. It carries out the reaction RNA(n+1) + phosphate = RNA(n) + a ribonucleoside 5'-diphosphate. Functionally, involved in mRNA degradation. Catalyzes the phosphorolysis of single-stranded polyribonucleotides processively in the 3'- to 5'-direction. In Thiobacillus denitrificans (strain ATCC 25259 / T1), this protein is Polyribonucleotide nucleotidyltransferase.